Here is a 228-residue protein sequence, read N- to C-terminus: MADEKNKSQNPDLEQRDINNPRDREALNRAADDFLKARKAEARAEVAEDEAEAAVDETANRIAMLEADNGELKDQLLRAAAEMENLRKRTQRDVQDARTYAVTNFARDMLSVSDNLRRALDAIPADALATDASLKSLADGVEMTERAMLQALERHGVKKLEPEGEKFDPNFHQAMFEVPNPDLPNNTVVQVVQDGYAIGDRVLRPAMVGVSKGGPKATADNGASEGNG.

Disordered stretches follow at residues 1-31 (MADE…NRAA) and 209-228 (GVSK…EGNG).

It belongs to the GrpE family. Homodimer.

The protein localises to the cytoplasm. Functionally, participates actively in the response to hyperosmotic and heat shock by preventing the aggregation of stress-denatured proteins, in association with DnaK and GrpE. It is the nucleotide exchange factor for DnaK and may function as a thermosensor. Unfolded proteins bind initially to DnaJ; upon interaction with the DnaJ-bound protein, DnaK hydrolyzes its bound ATP, resulting in the formation of a stable complex. GrpE releases ADP from DnaK; ATP binding to DnaK triggers the release of the substrate protein, thus completing the reaction cycle. Several rounds of ATP-dependent interactions between DnaJ, DnaK and GrpE are required for fully efficient folding. The chain is Protein GrpE from Brucella anthropi (strain ATCC 49188 / DSM 6882 / CCUG 24695 / JCM 21032 / LMG 3331 / NBRC 15819 / NCTC 12168 / Alc 37) (Ochrobactrum anthropi).